We begin with the raw amino-acid sequence, 333 residues long: Lipoyl synthase (333 aa).

Residues 1-29 (MTDSASGASAVANIATPSNEPYDATRKQK) are disordered. [4Fe-4S] cluster is bound by residues cysteine 80, cysteine 85, cysteine 91, cysteine 106, cysteine 110, cysteine 113, and serine 320. In terms of domain architecture, Radical SAM core spans 91-309 (CFGKGTATFM…EEKAYEMGFT (219 aa)).

This sequence belongs to the radical SAM superfamily. Lipoyl synthase family. Requires [4Fe-4S] cluster as cofactor.

The protein resides in the cytoplasm. It catalyses the reaction [[Fe-S] cluster scaffold protein carrying a second [4Fe-4S](2+) cluster] + N(6)-octanoyl-L-lysyl-[protein] + 2 oxidized [2Fe-2S]-[ferredoxin] + 2 S-adenosyl-L-methionine + 4 H(+) = [[Fe-S] cluster scaffold protein] + N(6)-[(R)-dihydrolipoyl]-L-lysyl-[protein] + 4 Fe(3+) + 2 hydrogen sulfide + 2 5'-deoxyadenosine + 2 L-methionine + 2 reduced [2Fe-2S]-[ferredoxin]. Its pathway is protein modification; protein lipoylation via endogenous pathway; protein N(6)-(lipoyl)lysine from octanoyl-[acyl-carrier-protein]: step 2/2. In terms of biological role, catalyzes the radical-mediated insertion of two sulfur atoms into the C-6 and C-8 positions of the octanoyl moiety bound to the lipoyl domains of lipoate-dependent enzymes, thereby converting the octanoylated domains into lipoylated derivatives. This is Lipoyl synthase from Ralstonia nicotianae (strain ATCC BAA-1114 / GMI1000) (Ralstonia solanacearum).